The following is a 250-amino-acid chain: Eukaryotic translation initiation factor 3 subunit K (250 aa).

One can recognise a PCI domain in the interval 54–235 (YDLFGNLAIL…DVKAGVVKEN (182 aa)).

It belongs to the eIF-3 subunit K family. In terms of assembly, component of the eukaryotic translation initiation factor 3 (eIF-3) complex.

It is found in the cytoplasm. Its function is as follows. Component of the eukaryotic translation initiation factor 3 (eIF-3) complex, which is involved in protein synthesis of a specialized repertoire of mRNAs and, together with other initiation factors, stimulates binding of mRNA and methionyl-tRNAi to the 40S ribosome. The eIF-3 complex specifically targets and initiates translation of a subset of mRNAs involved in cell proliferation. This Cryptococcus neoformans var. neoformans serotype D (strain B-3501A) (Filobasidiella neoformans) protein is Eukaryotic translation initiation factor 3 subunit K.